The chain runs to 835 residues: Outer membrane usher protein FasD (835 aa).

The signal sequence occupies residues 1-21 (MNKYPPLLTMLIIGIGSNAVA). The cysteines at positions 810 and 834 are disulfide-linked.

It belongs to the fimbrial export usher family.

It is found in the cell outer membrane. Involved in the export and assembly of the 987P fimbriae subunits across the outer membrane. This chain is Outer membrane usher protein FasD (fasD), found in Escherichia coli.